We begin with the raw amino-acid sequence, 66 residues long: Muscarinic toxin alpha (66 aa).

4 disulfides stabilise this stretch: Cys-3–Cys-24, Cys-17–Cys-42, Cys-46–Cys-58, and Cys-59–Cys-64.

The protein belongs to the three-finger toxin family. Short-chain subfamily. Aminergic toxin sub-subfamily. In terms of tissue distribution, expressed by the venom gland.

It localises to the secreted. In terms of biological role, selectively binds with high-affinity to the a2B-adrenoceptor subtype (ADRA2B). The toxin reversibly binds to ADRA2B, and its mode of inhibition is non-competitive. The toxin has also been described to bind with high affinity to all muscarinic receptor subtypes (Ki=23 nM (on CHRM1), Ki=44 nM (on CHRM2), Ki=3 nM (on CHRM3), Ki=5 nM (on CHRM4), and Ki=8 nM (on CHRM5)) but no other data support these affinity values. This chain is Muscarinic toxin alpha, found in Dendroaspis polylepis polylepis (Black mamba).